Reading from the N-terminus, the 314-residue chain is MLPSNITSTHPAVFLLVGIPGLEHLHAWISIPFCFAYTLALLGNCTLLFIIQADAALHEPMYLFLAMLATIDLVLSSTTLPKMLAIFWFRDQEINFFACLVQMFFLHSFSIMESAVLLAMAFDRYVAICKPLHYTTVLTGSLITKIGMAAVARAVTLMTPLPFLLRRFHYCRGPVIAHCYCEHMAVVRLACGDTSFNNIYGIAVAMFIVVLDLLFVILSYVFILQAVLQLASQEARYKAFGTCVSHIGAILSTYTPVVISSVMHRVARHAAPRVHILLAIFYLLFPPMVNPIIYGVKTKQIREYVLSLFQRKNM.

At 1–27 (MLPSNITSTHPAVFLLVGIPGLEHLHA) the chain is on the extracellular side. N-linked (GlcNAc...) asparagine glycosylation occurs at asparagine 5. Residues 28–48 (WISIPFCFAYTLALLGNCTLL) form a helical membrane-spanning segment. The Cytoplasmic segment spans residues 49–56 (FIIQADAA). A helical membrane pass occupies residues 57–77 (LHEPMYLFLAMLATIDLVLSS). The Extracellular portion of the chain corresponds to 78–101 (TTLPKMLAIFWFRDQEINFFACLV). Cysteine 99 and cysteine 191 form a disulfide bridge. The chain crosses the membrane as a helical span at residues 102 to 122 (QMFFLHSFSIMESAVLLAMAF). Residues 123-141 (DRYVAICKPLHYTTVLTGS) are Cytoplasmic-facing. Residues 142–162 (LITKIGMAAVARAVTLMTPLP) form a helical membrane-spanning segment. At 163–198 (FLLRRFHYCRGPVIAHCYCEHMAVVRLACGDTSFNN) the chain is on the extracellular side. Residues 199 to 219 (IYGIAVAMFIVVLDLLFVILS) traverse the membrane as a helical segment. The Cytoplasmic portion of the chain corresponds to 220-239 (YVFILQAVLQLASQEARYKA). Residues 240-260 (FGTCVSHIGAILSTYTPVVIS) form a helical membrane-spanning segment. Topologically, residues 261-275 (SVMHRVARHAAPRVH) are extracellular. A helical membrane pass occupies residues 276-296 (ILLAIFYLLFPPMVNPIIYGV). Residues 297 to 314 (KTKQIREYVLSLFQRKNM) are Cytoplasmic-facing.

This sequence belongs to the G-protein coupled receptor 1 family.

Its subcellular location is the cell membrane. Its function is as follows. Odorant receptor. This chain is Olfactory receptor 52K1 (OR52K1), found in Homo sapiens (Human).